Reading from the N-terminus, the 179-residue chain is Apoptosis regulator DPV022 (179 aa).

The helical transmembrane segment at 148–170 (VLITNYLKITIFGAILGITAYYI) threads the bilayer.

As to quaternary structure, interacts with host BAX and BAK1.

Its subcellular location is the host mitochondrion. The protein resides in the host membrane. Plays a role in the inhibition of host apoptosis by sequestering and inactivating several proapoptotic BCL-2 proteins, including BAK1 and BAX. Prevents the conformational activation of both of them. The chain is Apoptosis regulator DPV022 (DPV022) from Deerpox virus (strain Mule deer/United States/W-848-83/1983) (DPV).